A 167-amino-acid chain; its full sequence is cAMP-dependent protein kinase type I-alpha regulatory subunit (167 aa).

Thr12 bears the Phosphothreonine mark. 2 positions are modified to phosphoserine: Ser14 and Ser20. The Pseudophosphorylation motif motif lies at 30 to 33 (RGAI). Ser34 is modified (phosphoserine). Residues 51 to 78 (LFSH…SKVS), 79 to 167 (ILES…ILKR), Glu147, and Arg156 contribute to the 3',5'-cyclic AMP site. Ser82 bears the Phosphoserine mark.

This sequence belongs to the cAMP-dependent kinase regulatory chain family. In terms of assembly, the inactive holoenzyme is composed of two regulatory chains and two catalytic chains. Activation by cAMP releases the two active catalytic monomers and the regulatory dimer. Interacts with PRKACA and PRKACB. PRKAR1A also interacts with RFC2; the complex may be involved in cell survival. Interacts with AKAP4. Interacts with RARA; the interaction occurs in the presence of cAMP or FSH and regulates RARA transcriptional activity. Interacts with the phosphorylated form of PJA2. Interacts with CBFA2T3. Interacts with PRKX; regulates this cAMP-dependent protein kinase. Interacts with smAKAP; this interaction may target PRKAR1A to the plasma membrane. Interacts with AICDA. The pseudophosphorylation site binds to the substrate-binding region of the catalytic chain, resulting in the inhibition of its activity.

The protein localises to the cell membrane. Regulatory subunit of the cAMP-dependent protein kinases involved in cAMP signaling in cells. In Mesocricetus auratus (Golden hamster), this protein is cAMP-dependent protein kinase type I-alpha regulatory subunit.